The following is a 431-amino-acid chain: Glucose-1-phosphate adenylyltransferase (431 aa).

Lysine 39 contacts beta-D-fructose 1,6-bisphosphate. 3 residues coordinate AMP: arginine 40, histidine 46, and arginine 52. Tyrosine 114 provides a ligand contact to alpha-D-glucose 1-phosphate. An AMP-binding site is contributed by arginine 130. Residues glycine 179, 194–195 (EK), and serine 212 each bind alpha-D-glucose 1-phosphate. 2 residues coordinate AMP: glutamate 370 and arginine 386. Residues 419 to 423 (REMLR) and 429 to 431 (QER) each bind beta-D-fructose 1,6-bisphosphate.

This sequence belongs to the bacterial/plant glucose-1-phosphate adenylyltransferase family. In terms of assembly, homotetramer.

The catalysed reaction is alpha-D-glucose 1-phosphate + ATP + H(+) = ADP-alpha-D-glucose + diphosphate. It participates in glycan biosynthesis; glycogen biosynthesis. Allosterically activated by fructose-1,6-bisphosphate (F16BP) and inhibited by AMP. Functionally, involved in the biosynthesis of ADP-glucose, a building block required for the elongation reactions to produce glycogen. Catalyzes the reaction between ATP and alpha-D-glucose 1-phosphate (G1P) to produce pyrophosphate and ADP-Glc. The sequence is that of Glucose-1-phosphate adenylyltransferase from Shigella boydii serotype 18 (strain CDC 3083-94 / BS512).